Reading from the N-terminus, the 210-residue chain is Probable peroxygenase 7 (210 aa).

The interval 1-24 is disordered; it reads MSHQTVALASKAKSPKPKRGKLDK. Residues 25–60 form the EF-hand domain; sequence EKMTALEKHVSFFDRNKDGTVYPWETYQGFRALGTG. Histidine 33 lines the heme pocket. Ca(2+) is bound by residues aspartate 38, asparagine 40, aspartate 42, threonine 44, and glutamate 49. The short motif at 81-90 is the Proline-knot element; that stretch reads PGKGFSPLFP. Serine 188 carries the post-translational modification Phosphoserine.

Belongs to the caleosin family. As to quaternary structure, homodimer. Heme b is required as a cofactor. The cofactor is Ca(2+). In terms of tissue distribution, expressed in pollen coat.

Its subcellular location is the secreted. It catalyses the reaction RH + ROOH = ROH + ROH.. Its function is as follows. Probable calcium-binding peroxygenase. May be involved in pollination. This is Probable peroxygenase 7 (PXG7) from Arabidopsis thaliana (Mouse-ear cress).